Here is a 273-residue protein sequence, read N- to C-terminus: Bis(5'-nucleosyl)-tetraphosphatase, symmetrical (273 aa).

This sequence belongs to the Ap4A hydrolase family.

The catalysed reaction is P(1),P(4)-bis(5'-adenosyl) tetraphosphate + H2O = 2 ADP + 2 H(+). Hydrolyzes diadenosine 5',5'''-P1,P4-tetraphosphate to yield ADP. This chain is Bis(5'-nucleosyl)-tetraphosphatase, symmetrical, found in Aliivibrio salmonicida (strain LFI1238) (Vibrio salmonicida (strain LFI1238)).